Here is an 858-residue protein sequence, read N- to C-terminus: Neural cell adhesion molecule 1 (858 aa).

An N-terminal signal peptide occupies residues 1–19 (MLQTKDLIWTLFFLGTAVS). 5 consecutive Ig-like C2-type domains span residues 20-111 (LQVD…ATVN), 116-205 (QKLM…KDIQ), 212-301 (PTIQ…ATIH), 308-413 (PKIT…LEVQ), and 416-501 (PKLQ…ESLE). The Extracellular segment spans residues 20 to 718 (LQVDIVPSQG…IPANGSPTSG (699 aa)). Cystine bridges form between Cys41/Cys96 and Cys139/Cys189. N-linked (GlcNAc...) asparagine glycosylation is present at Asn222. Cysteines 235 and 287 form a disulfide. N-linked (GlcNAc...) asparagine glycans are attached at residues Asn315, Asn347, Asn433, Asn459, and Asn488. Cys329 and Cys395 are oxidised to a cystine. Residues Cys436 and Cys489 are joined by a disulfide bond. 2 Fibronectin type-III domains span residues 509–608 (TPSS…TQPV) and 611–706 (EPSA…SAQP). A lipid anchor (GPI-anchor amidated asparagine) is attached at Pro706. A helical membrane pass occupies residues 719–739 (LSTGAIVGILIVIFVLLLVVV). The Cytoplasmic portion of the chain corresponds to 740 to 858 (DITCYFLNKC…TQTKENESKA (119 aa)). A lipid anchor (GPI-anchor amidated asparagine) is attached at Ile741. The tract at residues 766-858 (GAKGKDMEEG…TQTKENESKA (93 aa)) is disordered. Composition is skewed to basic and acidic residues over residues 768-809 (KGKD…HTEP) and 817-834 (EPEKGPVEAKPECQETET). Phosphoserine occurs at positions 780 and 784.

(Microbial infection) Interacts with rabies virus glycoprotein. In terms of assembly, (Microbial infection) Interacts with Zika virus envelope protein E. As to quaternary structure, interacts with MDK. Found in a complex with SLC39A6, SLC39A10 and with NCAM1; this complex controls NCAM1 phosphorylation and integration into focal adhesion complexes during epithelial-tomesenchymal transition. Interacts with synaptic plasticity regulator PANTS. Polysialylated at Asn-459 and Asn-488 by ST8SIA2 and ST8SIA4. Polysialylation modulates cell interactions by confering both attractive and repulsive properties that are highly regulated by ST8SIA2 and ST8SIA4. Polysialylation is formed on a-2,3-linked sialic acid of core glycans.

Its subcellular location is the cell membrane. It localises to the secreted. In terms of biological role, this protein is a cell adhesion molecule involved in neuron-neuron adhesion, neurite fasciculation, outgrowth of neurites, etc. (Microbial infection) Acts as a receptor for rabies virus. Its function is as follows. (Microbial infection) Acts as a receptor for Zika virus. The chain is Neural cell adhesion molecule 1 from Homo sapiens (Human).